Reading from the N-terminus, the 461-residue chain is MSSDKAKAFDAQFPTYKSEFQIPTFESLGIQNSKYSPETNSIYLCGNSLGLMPRNTTELINRELQAWSSRGVEAHFNHSHPQGTDWVDIDLPLLPLLAPLVGAKQNEVAVMGSLTSNLNALLIHFYKPKGKRTKILFEKQAFPSDYYAFLNIVQVFGYDASHLIQIEIPKGETYIKTETILDVFDKYEDEIAIVCLPGIQYYTGQFFDIAKITKHVKTSAPDVVVGWDLAHAVGNVPLSLHDWGVDFAAWCSYKYLNAGPGAIAGIFVNEKYTEQNKPENYKPRLAGWWGNNSSQRFQMLEKFDPIASALSYRQLNPSVLDCVALKSSLEIFNKVGGMLSLRDKSLAMTQFLQDILTKSNYYIEQGETDVNKFGFKIITPLDPNQRGCQLSLLFQPHRDEKKQNVMERVFEYLHQHAIICDERRPDVIRLAPLPLYNTFEETRIGATRLLEALEAIKDDYI.

Residues Leu114, Thr115, 142 to 145 (FPSD), Asp228, His231, and Tyr253 each bind pyridoxal 5'-phosphate. Lys254 is subject to N6-(pyridoxal phosphate)lysine. Pyridoxal 5'-phosphate is bound by residues Trp288 and Asn316.

It belongs to the kynureninase family. As to quaternary structure, homodimer. The cofactor is pyridoxal 5'-phosphate.

The protein localises to the cytoplasm. It catalyses the reaction L-kynurenine + H2O = anthranilate + L-alanine + H(+). The catalysed reaction is 3-hydroxy-L-kynurenine + H2O = 3-hydroxyanthranilate + L-alanine + H(+). It participates in amino-acid degradation; L-kynurenine degradation; L-alanine and anthranilate from L-kynurenine: step 1/1. It functions in the pathway cofactor biosynthesis; NAD(+) biosynthesis; quinolinate from L-kynurenine: step 2/3. In terms of biological role, catalyzes the cleavage of L-kynurenine (L-Kyn) and L-3-hydroxykynurenine (L-3OHKyn) into anthranilic acid (AA) and 3-hydroxyanthranilic acid (3-OHAA), respectively. In Lodderomyces elongisporus (strain ATCC 11503 / CBS 2605 / JCM 1781 / NBRC 1676 / NRRL YB-4239) (Yeast), this protein is Kynureninase.